Consider the following 696-residue polypeptide: Polyphosphate kinase (696 aa).

Asparagine 45 serves as a coordination point for ATP. Residues arginine 373 and arginine 403 each contribute to the Mg(2+) site. The PLD phosphodiesterase domain maps to 428–462 (PGLKIHSKLLMISRREGDDIIRYAHIGTGNFHEKT). Histidine 433 serves as the catalytic Phosphohistidine intermediate. ATP is bound by residues tyrosine 466, arginine 562, and histidine 590.

Belongs to the polyphosphate kinase 1 (PPK1) family. It depends on Mg(2+) as a cofactor. An intermediate of this reaction is the autophosphorylated ppk in which a phosphate is covalently linked to a histidine residue through a N-P bond.

It carries out the reaction [phosphate](n) + ATP = [phosphate](n+1) + ADP. Functionally, catalyzes the reversible transfer of the terminal phosphate of ATP to form a long-chain polyphosphate (polyP). This Vibrio parahaemolyticus serotype O3:K6 (strain RIMD 2210633) protein is Polyphosphate kinase.